The following is a 249-amino-acid chain: Proteasome subunit alpha type-7 (249 aa).

The protein belongs to the peptidase T1A family. The 26S proteasome consists of a 20S proteasome core and two 19S regulatory subunits. The 20S proteasome core is a barrel-shaped complex made of 28 subunits that are arranged in four stacked rings. The two outer rings are each formed by seven alpha subunits, and the two inner rings are formed by seven beta subunits. The proteolytic activity is exerted by three beta-subunits PSMB5, PSMB6 and PSMB7. PSMA7 interacts directly with the PSMG1-PSMG2 heterodimer which promotes 20S proteasome assembly. Interacts with HIF1A. Interacts with RAB7A. Interacts with PRKN. Interacts with ABL1 and ABL2. Interacts with EMAP2. Interacts with MAVS.

The protein resides in the cytoplasm. It is found in the nucleus. Its function is as follows. Component of the 20S core proteasome complex involved in the proteolytic degradation of most intracellular proteins. This complex plays numerous essential roles within the cell by associating with different regulatory particles. Associated with two 19S regulatory particles, forms the 26S proteasome and thus participates in the ATP-dependent degradation of ubiquitinated proteins. The 26S proteasome plays a key role in the maintenance of protein homeostasis by removing misfolded or damaged proteins that could impair cellular functions, and by removing proteins whose functions are no longer required. Associated with the PA200 or PA28, the 20S proteasome mediates ubiquitin-independent protein degradation. This type of proteolysis is required in several pathways including spermatogenesis (20S-PA200 complex) or generation of a subset of MHC class I-presented antigenic peptides (20S-PA28 complex). Inhibits the transactivation function of HIF-1A under both normoxic and hypoxia-mimicking conditions. The interaction with EMAP2 increases the proteasome-mediated HIF-1A degradation under the hypoxic conditions. Plays a role in hepatitis C virus internal ribosome entry site-mediated translation. Mediates nuclear translocation of the androgen receptor (AR) and thereby enhances androgen-mediated transactivation. Promotes MAVS degradation and thereby negatively regulates MAVS-mediated innate immune response. This chain is Proteasome subunit alpha type-7 (PSMA7), found in Gallus gallus (Chicken).